The sequence spans 342 residues: MVLVKQVRLGNSGLKISPIVIGCMSYGSKKWADWVIEDKTQIFKIMKHCYDKGLRTFDTADFYSNGLSERIIKEFLEYYSIKRETVVIMTKIYFPVDETLDLHHNFTLNEFEELDLSNQRGLSRKHIIAGVENSVKRLGTYIDLLQIHRLDHETPMKEIMKALNDVVEAGHVRYIGASSMLATEFAELQFTADKYGWFQFISSQSYYNLLYREDERELIPFAKRHNIGLLPWSPNARGMLTRPLNQSTDRIKSDPTFKSLHLDNLEEEQKEIINRVEKVSKDKKVSMAMLSIAWVLHKGCHPIVGLNTTARVDEAIAALQVTLTEEEIKYLEEPYKPQRQRC.

This sequence belongs to the aldo/keto reductase family. Aldo/keto reductase 2 subfamily.

Putative aryl-alcohol dehydrogenase. This chain is Putative aryl-alcohol dehydrogenase AAD16, found in Saccharomyces cerevisiae (strain ATCC 204508 / S288c) (Baker's yeast).